The following is a 100-amino-acid chain: Large ribosomal subunit protein uL23 (100 aa).

This sequence belongs to the universal ribosomal protein uL23 family. In terms of assembly, part of the 50S ribosomal subunit. Contacts protein L29, and trigger factor when it is bound to the ribosome.

Functionally, one of the early assembly proteins it binds 23S rRNA. One of the proteins that surrounds the polypeptide exit tunnel on the outside of the ribosome. Forms the main docking site for trigger factor binding to the ribosome. This chain is Large ribosomal subunit protein uL23, found in Idiomarina loihiensis (strain ATCC BAA-735 / DSM 15497 / L2-TR).